A 157-amino-acid polypeptide reads, in one-letter code: 6,7-dimethyl-8-ribityllumazine synthase (157 aa).

5-amino-6-(D-ribitylamino)uracil-binding positions include F26, 60 to 62, and 86 to 88; these read ALE and AVI. 91–92 provides a ligand contact to (2S)-2-hydroxy-3-oxobutyl phosphate; that stretch reads ET. H94 (proton donor) is an active-site residue. N119 lines the 5-amino-6-(D-ribitylamino)uracil pocket. Residue R133 participates in (2S)-2-hydroxy-3-oxobutyl phosphate binding.

Belongs to the DMRL synthase family.

It carries out the reaction (2S)-2-hydroxy-3-oxobutyl phosphate + 5-amino-6-(D-ribitylamino)uracil = 6,7-dimethyl-8-(1-D-ribityl)lumazine + phosphate + 2 H2O + H(+). Its pathway is cofactor biosynthesis; riboflavin biosynthesis; riboflavin from 2-hydroxy-3-oxobutyl phosphate and 5-amino-6-(D-ribitylamino)uracil: step 1/2. Catalyzes the formation of 6,7-dimethyl-8-ribityllumazine by condensation of 5-amino-6-(D-ribitylamino)uracil with 3,4-dihydroxy-2-butanone 4-phosphate. This is the penultimate step in the biosynthesis of riboflavin. This Laribacter hongkongensis (strain HLHK9) protein is 6,7-dimethyl-8-ribityllumazine synthase.